Reading from the N-terminus, the 1082-residue chain is Inner tegument protein (1082 aa).

An interaction with large tegument protein region spans residues 604-1082; it reads DHIECLFNVS…QQDLITPLKF (479 aa).

It belongs to the herpesviridae inner tegument protein family. Interacts (via C-terminus) with the large tegument protein/LTP (via N-terminus).

Its subcellular location is the virion tegument. The protein resides in the host cytoplasm. It localises to the host nucleus. It is found in the host Golgi apparatus. The protein localises to the host trans-Golgi network. Its function is as follows. Plays an essential role in cytoplasmic secondary envelopment during viral egress. Interacts with the capsid via the large tegument protein/LTP and participates in its transport to the host trans-Golgi network (TGN) where secondary envelopment occurs. Modulates tegumentation and capsid accumulation at the viral assembly complex. This chain is Inner tegument protein (U30), found in Homo sapiens (Human).